A 131-amino-acid chain; its full sequence is Small ribosomal subunit protein uS8 (131 aa).

This sequence belongs to the universal ribosomal protein uS8 family. Part of the 30S ribosomal subunit. Contacts proteins S5 and S12.

In terms of biological role, one of the primary rRNA binding proteins, it binds directly to 16S rRNA central domain where it helps coordinate assembly of the platform of the 30S subunit. The protein is Small ribosomal subunit protein uS8 of Azobacteroides pseudotrichonymphae genomovar. CFP2.